The sequence spans 417 residues: Serine hydroxymethyltransferase (417 aa).

Residues Leu-120 and 124-126 (GHL) each bind (6S)-5,6,7,8-tetrahydrofolate. Residue Lys-229 is modified to N6-(pyridoxal phosphate)lysine.

This sequence belongs to the SHMT family. In terms of assembly, homodimer. Requires pyridoxal 5'-phosphate as cofactor.

The protein localises to the cytoplasm. The enzyme catalyses (6R)-5,10-methylene-5,6,7,8-tetrahydrofolate + glycine + H2O = (6S)-5,6,7,8-tetrahydrofolate + L-serine. The protein operates within one-carbon metabolism; tetrahydrofolate interconversion. Its pathway is amino-acid biosynthesis; glycine biosynthesis; glycine from L-serine: step 1/1. Catalyzes the reversible interconversion of serine and glycine with tetrahydrofolate (THF) serving as the one-carbon carrier. This reaction serves as the major source of one-carbon groups required for the biosynthesis of purines, thymidylate, methionine, and other important biomolecules. Also exhibits THF-independent aldolase activity toward beta-hydroxyamino acids, producing glycine and aldehydes, via a retro-aldol mechanism. This Anaeromyxobacter dehalogenans (strain 2CP-C) protein is Serine hydroxymethyltransferase.